The following is a 2036-amino-acid chain: MDRNYPSAGFGDPLGAGAGWSYERSAKASLVYGSSRTSHPETDILHRQAYAAPHPLQSYATNHHPAGLSGLFDTGLHHAGSAGPDASVMNLISALESRGPQPGPSASSLLSQFRSPSWQTAMHTPGPTELFISGALPGSSTFPSSSALSAYQHPASFGSRPFPVPSSLSLQDPPFSPPANGLLSPHDVLHLKPSQAPTVPSSLGFERLAGGGVLGPAGLGPAQTPPYRPGPPDPPPPPRHLPTQFNLLASSSAAAAAAEQSSPQLYNFSGAAPGPPPPERALPRQDTVIKHYQRPASAQPPPPPPPAHALQHYLSCGGSYPSMGHRANLACSPLGGGEPSPGAGEPSKAGPSGATAGASGRATGPEAAGGGGAGGGGGGYRPIIQSPGYKTGKGGYGAAAGGATRPPPPRSTATPKCQSLGGPAAAYATGKASGAGGAGGQAYSPGQPQGLLGPQAYGQGFGGGQAQDLSKAPSYSGGPPQPPSGPPPPGLATCQSYSPDQLQGQLYGVQGEPYPGPAAHSQGLPTASPSLSYSTGHSPALSGHGGGWGPSSLGGGGEASPSHIIRPLQSPPATGRPPGVGSPGAPGKYLSSVLASAPFLAPPGAGSYAAGAGGYKGKGDGSELLAGPGGPPAERTEDEEFLIQHLLQAPSPPRTSGADGLVGEDGAADASKGLGGSGGAGGPPGTPYELAKEDPQRYHLQSVIRTSASLDEGATAALELGLGRLKEKKKGPERGGETPEGLATSVVHYGAGAKELGAFLQKSPPPPPPTAQSTQPTPHGLLLEAGGPDLPLVLPPPPPQLLPSVLSHAPSPSPSASKVGVHLLEPATRDGAPQPPPPPPPPPPPMPLQLEAHLRSHGLEPAAPSPRLRPEESLDPPGAMQELLGALEPLPPAPGDTGVGPPNSEGKDPAGAYRSPSPQGTKAPRFVPLTSICFPDSLLQDEERSFFPTMEEMFGGGAADDYGKAGPPEDEGDPKAGAGPPPGPPAYDPYGPYCPGRASGAGPETPGLGLDPNKPPELPSTVNAEPLGLIQSGPHQAAPPPPPPPPPPPAPASEPKGGLTSPIFCSTKPKKLLKTSSFHLLRRRDPPFQTPKKLYAQEYEFEADEDKADVPADIRLNPRRLPDLVSSCRSRPALSPLGDIDFCPPNPGPDGPRRRGRKPTKAKRDGPPRPRGRPRIRPLEVPTTAGPASASTPTDGAKKPRGRGRGRGRKAEEAGGTRLEPLKPLKIKLSVPKAGEGLGTSSGDAISGTDHNSLDSSLTREKIEAKIKEVEEKQPEMKSGFMASFLDFLKSGKRHPPLYQAGLTPPLSPPKSVPPSVPARGLQPQPPATPAVPHPPPSGAFGLGGALEAAESEGLGLGCPSPCKRLDEELKRNLETLPSFSSDEEDSVAKNRDLQESISSAISALDDPPLAGPKDTSTPDGPPLAPAAAVPGPPPLPGLPSANSNGTPEPPLLEEKPPPTPPPAPTPQPQPPPPPPPPQPALPSPPPLVAPTPSSPPPPPLPPPPPPAMPSPPPPPPPAAAPLAAPPEEPAAPSPEDPELPDTRPLHLAKKQETAAVCGETDEEAGESGGEGIFRERDEFVIRAEDIPSLKLALQTGREPPPIWRVQKALLQKFTPEIKDGQRQFCATSNYLGYFGDAKNRYQRLYVKFLENVNKKDYVRVCARKPWHRPPVPVRRSGQAKNPVSAGGSSAPPPKAPAPPPKPETPEKTTSEKPPEQTPETAMPEPPAPEKPSLLRPVEKEKEKEKVTRGERPLRGERATSGRQTRPERSLATGQPATSRLPKARPTKVKAEPPPKKRKKWLKEAGGNATAGGGPPGSSSDSESSPGAPSEDERAVPGRLLKTRAMREMYRSYVEMLVSTALDPDMIQALEDTHDELYLPPMRKIDGLLNEHKKKVLKRLSLSPALQDALHTFPQLQVEQSGEGSPEEGAVRLRPAGEPYNRKTLSKLKRSVVRAQEFKVELEKSGYYTLYHSLHHYKYHTFLRCRDQTLAIEGGAEDLGQEEVVQQCMRNQPWLEQLFDSFSDLLAQAQAHSRCG.

3 disordered regions span residues 210-283 (GGGV…RALP), 331-587 (CSPL…GAPG), and 649-697 (APSP…DPQR). The span at 223-240 (QTPPYRPGPPDPPPPPRH) shows a compositional bias: pro residues. Residues 249 to 258 (ASSSAAAAAA) show a composition bias toward low complexity. Phosphoserine is present on residues serine 332 and serine 340. Residues 340–365 (SPGAGEPSKAGPSGATAGASGRATGP) show a composition bias toward low complexity. Gly residues-rich tracts occupy residues 367–380 (AAGG…GGGY) and 391–400 (TGKGGYGAAA). Composition is skewed to low complexity over residues 411 to 432 (STAT…TGKA) and 441 to 458 (QAYS…QAYG). Pro residues predominate over residues 479–490 (PPQPPSGPPPPG). Composition is skewed to polar residues over residues 493–504 (TCQSYSPDQLQG) and 523–537 (GLPT…STGH). Residues 543–558 (GHGGGWGPSSLGGGGE) show a composition bias toward gly residues. Serine 651 carries the phosphoserine modification. The segment covering 673–683 (GLGGSGGAGGP) has biased composition (gly residues). Threonine 738 carries the post-translational modification Phosphothreonine. 4 disordered regions span residues 758 to 850 (AFLQ…PLQL), 859 to 878 (LEPA…DPPG), 886 to 925 (ALEP…KAPR), and 952 to 1068 (EMFG…CSTK). Residues 802 to 817 (LPSVLSHAPSPSPSAS) show a composition bias toward low complexity. Residues 833-847 (PQPPPPPPPPPPPMP) are compositionally biased toward pro residues. Phosphoserine is present on serine 865. The segment covering 1037 to 1052 (AAPPPPPPPPPPPAPA) has biased composition (pro residues). Residues serine 1077 and serine 1135 each carry the phosphoserine modification. Disordered regions lie at residues 1120–1260 (RLPD…SLTR), 1294–1347 (RHPP…GGAL), 1376–1573 (TLPS…GEGI), and 1668–1840 (HRPP…PGRL). The span at 1182-1194 (PTTAGPASASTPT) shows a compositional bias: low complexity. The segment covering 1199–1208 (KPRGRGRGRG) has biased composition (basic residues). Residues 1209 to 1223 (RKAEEAGGTRLEPLK) are compositionally biased toward basic and acidic residues. Position 1223 is an N6-acetyllysine (lysine 1223). Positions 1239–1257 (GTSSGDAISGTDHNSLDSS) are enriched in polar residues. Threonine 1304 is subject to Phosphothreonine. 2 stretches are compositionally biased toward pro residues: residues 1306-1317 (PLSPPKSVPPSV) and 1324-1338 (PQPP…PPPS). Serine 1308 bears the Phosphoserine mark. Serine 1381, serine 1382, and serine 1387 each carry phosphoserine. Composition is skewed to pro residues over residues 1420–1438 (DGPP…PLPG) and 1458–1535 (PPTP…APSP). Positions 1541–1553 (PDTRPLHLAKKQE) are enriched in basic and acidic residues. Residue threonine 1561 is modified to Phosphothreonine. Serine 1568 is modified (phosphoserine). A compositionally biased stretch (pro residues) spans 1691-1703 (APPPKAPAPPPKP). Composition is skewed to basic and acidic residues over residues 1704–1715 (ETPEKTTSEKPP) and 1737–1769 (PVEK…RPER). At threonine 1705 the chain carries Phosphothreonine. Positions 1817-1829 (GSSSDSESSPGAP) are enriched in low complexity. Phosphoserine is present on serine 1925.

The protein resides in the nucleus. Its subcellular location is the postsynaptic density. It is found in the synapse. It localises to the synaptosome. In Homo sapiens (Human), this protein is Proline-rich protein 12.